The following is an 85-amino-acid chain: Large ribosomal subunit protein bL27 (85 aa).

The protein belongs to the bacterial ribosomal protein bL27 family.

The polypeptide is Large ribosomal subunit protein bL27 (Campylobacter concisus (strain 13826)).